A 266-amino-acid chain; its full sequence is Oxygen-evolving enhancer protein 2-3, chloroplastic (266 aa).

Residues 1–80 (MASTQCFLHH…VGSKVSPADA (80 aa)) constitute a chloroplast transit peptide.

It belongs to the PsbP family.

It is found in the plastid. The protein localises to the chloroplast thylakoid membrane. In terms of biological role, may be involved in the regulation of photosystem II. The sequence is that of Oxygen-evolving enhancer protein 2-3, chloroplastic (PSBP3) from Nicotiana tabacum (Common tobacco).